A 134-amino-acid polypeptide reads, in one-letter code: MKKTPLLNSQVSQAVATIGHFDLLTINDAGMPIPNDERRIDLAVTKALPRFIDVLETVVTEMEIQKIYLAEEIKMHNPDQLKAIKGLIAEDVEIEFIPHSQMKEYLSHPLNKGNVRTGEITPFSNIILESNVTF.

The Proton donor role is filled by His20. Substrate contacts are provided by residues Asp28, His99, and Phe123–Asn125.

The protein belongs to the RbsD / FucU family. RbsD subfamily. As to quaternary structure, homodecamer.

The protein localises to the cytoplasm. It catalyses the reaction beta-D-ribopyranose = beta-D-ribofuranose. The protein operates within carbohydrate metabolism; D-ribose degradation; D-ribose 5-phosphate from beta-D-ribopyranose: step 1/2. Functionally, catalyzes the interconversion of beta-pyran and beta-furan forms of D-ribose. The sequence is that of D-ribose pyranase from Staphylococcus carnosus (strain TM300).